We begin with the raw amino-acid sequence, 129 residues long: MTRTDDPAARRRRATYLRGHGAERLALLALLLKGYRPLARRFAAAGGEIDLVMRRGSVIAFVEVKARPTLDAAAAAIDARKRRAFSRAARAWIARHPWSAGLTLRADAVFVAPRRWPRHLVSAFDLEPS.

Belongs to the UPF0102 family.

The protein is UPF0102 protein Mnod_0024 of Methylobacterium nodulans (strain LMG 21967 / CNCM I-2342 / ORS 2060).